The chain runs to 884 residues: MASLRDIRATFLDYFAKHEHEVVPSAPLVPQDDPTLLFVNAGMVPFKNSFTGQEKRASLRATSSQKCVRAGGKHNDLDNVGYTARHHTFFEMLGNFSFGDYFKEEAISHAWNLVTGEFGLPAEKLLVTVYAEDEQARALWRKIAGLTDDRIIGISTSDNFWSMGDTGPCGPCSEIFFDHGPSIAGGPPGSPDEDGDRFIEIWNLVFMQYEQLGPDERINLPKPSIDTGMGLERISAILQGKHNNYETDLFRNLIAAGESVLGVKAEGDALASHRVIADHLRSTCFLMADGVTPSNEGRGYVLRRIMRRAMRHAHLLGAGEPVMWKLVDALKSEMGDAYPELERAQALLEETLQVEEERFQRTLGRGLSLLEEATADMGEGDALAGATAFKLYDTYGFPLDLTQDALRAKGMTVDEAGFNSAMDKQRADARASKFSSGDAAPDAVWFAVRDKVGATAFTGYAGTGGKGRLTAIVSGGQEAKALGSGQRAELVFDETPFYGESGGQCGDTGEIRFVDGAVFTVEDTQKRGGDMHAHIGVLTKGEITLGDVAALDADAPRRAAIRANHSATHLAHAALRDVLGAHVTQKGSHVGPDRLRFDFSHNKSVSADQIAAIEAQVNAVIRQNVPVSTREMTPDAAIEAGALALFGEKYGDTVRVLAMGQGLADHATPYSVELCGGTHVERTGDIALFKIIAETAVSSGIRRIEAMTGEGARLYMDEQIGFGRAAADALKTPPSDLATRVAALVDERRKLERQLAEAKKQLAMGGGASGAPAGPETINGVNFIGRVVEGVGGKDLRGLIDEAKAQMGSGVAAFIGVNDGKAALAVGVTDDLKDRFVAVDLVKAGAAAVGGKGGGGRPDFAQAGGPDGAKANDGLAAIRAALAG.

Zn(2+) contacts are provided by H565, H569, C675, and H679.

This sequence belongs to the class-II aminoacyl-tRNA synthetase family. Zn(2+) is required as a cofactor.

It is found in the cytoplasm. The catalysed reaction is tRNA(Ala) + L-alanine + ATP = L-alanyl-tRNA(Ala) + AMP + diphosphate. Its function is as follows. Catalyzes the attachment of alanine to tRNA(Ala) in a two-step reaction: alanine is first activated by ATP to form Ala-AMP and then transferred to the acceptor end of tRNA(Ala). Also edits incorrectly charged Ser-tRNA(Ala) and Gly-tRNA(Ala) via its editing domain. This Maricaulis maris (strain MCS10) (Caulobacter maris) protein is Alanine--tRNA ligase.